The primary structure comprises 50 residues: Large ribosomal subunit protein bL33 (50 aa).

Belongs to the bacterial ribosomal protein bL33 family.

This Hydrogenovibrio crunogenus (strain DSM 25203 / XCL-2) (Thiomicrospira crunogena) protein is Large ribosomal subunit protein bL33.